The chain runs to 163 residues: Nucleotide-binding protein ESA_02876 (163 aa).

This sequence belongs to the YajQ family.

In terms of biological role, nucleotide-binding protein. The polypeptide is Nucleotide-binding protein ESA_02876 (Cronobacter sakazakii (strain ATCC BAA-894) (Enterobacter sakazakii)).